A 418-amino-acid polypeptide reads, in one-letter code: Voltage-gated ClC-type chloride channel ClcB (418 aa).

10 consecutive transmembrane segments (helical) span residues 5–25 (LLIATVVGILAAFAVAGFRHA), 54–74 (LLTPALGGLAAGLLLMGWQKF), 146–166 (LWIACGAAAGMAAAYRAPLAG), 168–188 (LFIAEVLFGTMMLASLGPVII), 222–242 (ALIISTGVLAGLCGPLLLTLM), 258–278 (WQLALGGLIVGLLSLFTPAVW), 291–311 (APPLLMIIAGIFLCKLFAVLA), 316–336 (GAPGGVFTPTLFIGLAIGMLY), 352–372 (LLLGLTGMATLLAATTHAPIM), and 380–400 (MTGEYQLLPGLLIACVIASVI).

The protein belongs to the chloride channel (TC 2.A.49) family. ClcB subfamily.

The protein localises to the cell inner membrane. In terms of biological role, probably acts as an electrical shunt for an outwardly-directed proton pump that is linked to amino acid decarboxylation, as part of the extreme acid resistance (XAR) response. The chain is Voltage-gated ClC-type chloride channel ClcB from Escherichia coli O17:K52:H18 (strain UMN026 / ExPEC).